Reading from the N-terminus, the 555-residue chain is Transcriptional adapter 2b (555 aa).

Residues 8–63 (FTKYNCTNCQDDIQGIRVHCAECENFDLCLQCFAAGAEIGAHQNNHSYQFMDTGTS) form a ZZ-type zinc finger. Zn(2+) contacts are provided by C13, C16, C27, C30, C36, C39, H49, and H53. Residues 69 to 121 (RGKGAWTAREEIRLLDAIEQYGFGNWEDISKHIETKSAEDAKEEYVNKFVNGT) form the SANT domain. A disordered region spans residues 318 to 372 (THRSTGPYGHGKTDHTHTSNGSHRPPSSSLHSPQPNLRKVEMSSGGEASSNSIAP). Over residues 339–352 (SHRPPSSSLHSPQP) the composition is skewed to low complexity. The segment covering 363-372 (GEASSNSIAP) has biased composition (polar residues).

In terms of assembly, component of histone acetyltransferase complexes containing Gcn5 and Ada3. As to quaternary structure, can heterooligomerize with Isoform A. Component of the Spt-Ada-Gcn5 acetyltransferase (SAGA) complex consisting of Ada1, Ada2b (Isoform B), Ada3, wda, Saf6, Spt3, Spt7, Spt20, Taf9, Taf10b, Taf12, Nipped-A/Tra1, Sf3b3, Sf3b5, not/nonstop, Sgf11, Sgf29, e(y)2, Atxn7 and Gcn5. Taf5 and Taf10, which has partially redundant properties with Taf10b, may also be part of this complex. Interacts (via C-terminus) with Spt3 and Taf12; the interactions are direct. Interacts with Ada3; the interaction is probably direct. May also interact directly with Spt7 and Gcn5. Interacts with p53. Can heterooligomerize with Isoform B. Component of the Chiffon histone acetyltransferase (CHAT) complex consisting of Ada3, Sgf29, Gcn5, chif/chiffon and Ada2b (Isoform A). Interacts (via N-terminus) with Gcn5 and Ada3; the interaction is direct. Can interact directly with Spt7 in vitro but in vivo this interaction is not stable probably due to the absence of other SAGA components. Interacts with p53. Expressed in nurse cells of stage 10 egg chambers and transcripts are dumped into the oocyte when nurse cells degenerate at late oogenesis.

It localises to the nucleus. Component of several Gcn5-containing histone acetyltransferase complexes that regulate nucleosome organization; involved in acetylation of histone H3, particularly on Lys-10 (H3K9ac) and Lys-15 (H3K14ac). Regulates the transcription of a subset of genes during development; affects recruitment of RNA polymerase II. May be involved in the function of some acidic activation domains, which activate transcription at distant sites. Involved in the p53-dependent apoptosis pathway response to DNA damage by genotoxic agents. Its function is as follows. Component of the SAGA histone acetyltransferase complex, which predominantly acetylates histone H3. In terms of biological role, component of the CHAT histone acetyltransferase complex, which predominantly acetylates histone H3. The chain is Transcriptional adapter 2b from Drosophila melanogaster (Fruit fly).